The sequence spans 235 residues: Secretory carrier-associated membrane protein 5A (235 aa).

The Cytoplasmic segment spans residues 1 to 39 (MSDKPNNFPPLPRFIPLKPCFYQDFDTDIPDLHRTTAKR). The helical transmembrane segment at 40–60 (LYYLWMLNSITLGVNLIGCLA) threads the bilayer. The Extracellular segment spans residues 61-67 (WLIGGGS). Residues 68 to 88 (ATNFGLAFLWLILFTPCSYVC) traverse the membrane as a helical segment. Residues 89 to 102 (WFRPIYKAFKTDSS) lie on the Cytoplasmic side of the membrane. Residues 103-125 (FNFMAFFFTFTAQLVISIIQAVG) form a helical membrane-spanning segment. Residues 126 to 148 (IPGWGVCGWIASISFFGTNVGSA) are Extracellular-facing. A helical transmembrane segment spans residues 149-169 (VVMLIPTIMFTAVAVLSFVAL). Over 170 to 235 (TKVHRFYRGA…TPNYGYSNEM (66 aa)) the chain is Cytoplasmic.

Belongs to the SCAMP family. SCAMP5 subfamily.

It localises to the cell membrane. The protein localises to the golgi apparatus membrane. The protein resides in the golgi apparatus. It is found in the trans-Golgi network membrane. Its subcellular location is the recycling endosome membrane. It localises to the cytoplasmic vesicle. The protein localises to the secretory vesicle. The protein resides in the synaptic vesicle membrane. Required for the calcium-dependent exocytosis of signal sequence-containing cytokines. Probably acts in cooperation with the SNARE machinery. This chain is Secretory carrier-associated membrane protein 5A (scamp5-a), found in Xenopus laevis (African clawed frog).